Consider the following 303-residue polypeptide: NAD kinase (303 aa).

The active-site Proton acceptor is D85. Residues 85-86 (DG), 159-160 (ND), R187, D189, 200-205 (TAYALS), A224, and Q258 contribute to the NAD(+) site.

Belongs to the NAD kinase family. A divalent metal cation is required as a cofactor.

Its subcellular location is the cytoplasm. It carries out the reaction NAD(+) + ATP = ADP + NADP(+) + H(+). Functionally, involved in the regulation of the intracellular balance of NAD and NADP, and is a key enzyme in the biosynthesis of NADP. Catalyzes specifically the phosphorylation on 2'-hydroxyl of the adenosine moiety of NAD to yield NADP. In Variovorax paradoxus (strain S110), this protein is NAD kinase.